Consider the following 1040-residue polypeptide: Chromatin modification-related protein rik1 (1040 aa).

It belongs to the DDB1 family. As to quaternary structure, component of the Clr4 methyltransferase complex (ClrC) composed of at least clr4, rik1, pcu4, rbx1, raf1 and raf2. The cullin pcu4, rik1, raf1, raf2 and the ring-box protein rbx1 are components of an E3 ubiquitin ligase, whose activity is essential for heterochromatin assembly.

The protein localises to the nucleus. It localises to the cytoplasm. The protein resides in the cytoskeleton. It is found in the microtubule organizing center. Its subcellular location is the spindle pole body. The protein localises to the chromosome. In terms of biological role, component of the Clr4 methyltransferase complex (ClrC) which contributes to the establishment of heterochromatin by specifically methylating histone H3 to form H3K9me. ClrC preferentially ubiquitylates H3K14 and ClrC-mediated H3 ubiquitination promotes clr4 methyltransferase activity for the methylation of H3K9. H3K9me represents a specific tag for epigenetic transcriptional repression by recruiting swi6/HP1 to methylated histones which leads to transcriptional silencing within centromeric heterochromatin, telomeric regions and at the silent mating-type loci. Rik1 is involved in the RNAi-mediated targeting of ClrC to heterochromatic repeat elements. Rik1 also has a function in meiotic telomere clustering. The sequence is that of Chromatin modification-related protein rik1 (rik1) from Schizosaccharomyces pombe (strain 972 / ATCC 24843) (Fission yeast).